Consider the following 681-residue polypeptide: MSGEPRKILVTSALPYANGPIHLGHLLEYIQTDIWVRFQKLRGHQCTYVCADDAHGTAIMLKAEQMGITPEQLIDQVNADHRRDFAEFLIEFDNYYSTHSEENRELSSYIYKACLDAGKIATRTITQAYDPEKNLFLADRFIKGTCPKCKAEDQYGDNCEVCSSTYTPAELINPRSAISGATPIEKESTHFFFKLPDFQEFLQKWTRSGTLQPQIANKLAEWLDAGLQEWDISRDAPYFGFEIPDQPGKFFYVWLDAPIGYMASFKNLCARRADLDFDEYWKKDSTAELYHFIGKDIINFHALFWPSMLSCADFRTPSAVYAHGFVTVDGAKMSKSRGTFIMARTYLEHLNPEYLRYYFAAKLTSNVDDLDLNLQDFTLKVNADLVGKLVNIASRCAKFITKAGGKLSPQISEPELIEQFLSKSDFIAQAYEDREFGKAVREIMALADLANKYIDEKAPWKLAKEEGKEQEVLDVCSVGVNLFRILITYLAPVLPGVAAASAEFLNAPIVWNRPLEPLTDHAVNEFKPMISRVDPKAVDAMVDASKDNMAQAPKDNGKAKKDKKEAKSEEEIAPTIKFDDFAKIDLRIAKIVSAEHVEGADKLLRLQLDIGSEQRQVFAGIKSAYAPEDLVGRLTVMVANLEPRKMKFGMSEGMVLAAGPGGKDIWLLQPDSGAQPGMQVK.

Residues proline 15–histidine 25 carry the 'HIGH' region motif. Positions 146, 149, 159, and 162 each coordinate Zn(2+). The 'KMSKS' region motif lies at lysine 332–serine 336. Lysine 335 provides a ligand contact to ATP. Residues aspartate 547–glutamate 569 are disordered. Over residues aspartate 555–glutamate 569 the composition is skewed to basic and acidic residues. The tRNA-binding domain maps to aspartate 580–lysine 681.

It belongs to the class-I aminoacyl-tRNA synthetase family. MetG type 1 subfamily. Homodimer. The cofactor is Zn(2+).

It localises to the cytoplasm. The catalysed reaction is tRNA(Met) + L-methionine + ATP = L-methionyl-tRNA(Met) + AMP + diphosphate. In terms of biological role, is required not only for elongation of protein synthesis but also for the initiation of all mRNA translation through initiator tRNA(fMet) aminoacylation. In Hahella chejuensis (strain KCTC 2396), this protein is Methionine--tRNA ligase.